The following is a 903-amino-acid chain: KAT8 regulatory NSL complex subunit 1-like protein (903 aa).

Disordered regions lie at residues 319–343, 419–441, and 652–676; these read DSDA…DECN, MPKS…PSSP, and TECT…HRSE. Composition is skewed to polar residues over residues 423–441 and 652–661; these read PQGT…PSSP and TECTSSYSPD. The PEHE domain occupies 748–862; that stretch reads EIITPSWKEV…ESPKGKTIHW (115 aa).

This Xenopus tropicalis (Western clawed frog) protein is KAT8 regulatory NSL complex subunit 1-like protein (kansl1l).